We begin with the raw amino-acid sequence, 104 residues long: MQKIKKGDKVVVLSGRDKGRTGEVLKMMPKEDRALVRGVNLVRRHQKQTPQAEGGIITKEAPIHVSNLALADPKDGKPTRVGFKIQEDGKKVRVAKRSGELIDG.

This sequence belongs to the universal ribosomal protein uL24 family. Part of the 50S ribosomal subunit.

Its function is as follows. One of two assembly initiator proteins, it binds directly to the 5'-end of the 23S rRNA, where it nucleates assembly of the 50S subunit. Functionally, one of the proteins that surrounds the polypeptide exit tunnel on the outside of the subunit. This chain is Large ribosomal subunit protein uL24, found in Chelativorans sp. (strain BNC1).